The following is an 876-amino-acid chain: Valine--tRNA ligase (876 aa).

The 'HIGH' region motif lies at 44–54; it reads PNVTGKLHLGH. The 'KMSKS' region motif lies at 520–524; sequence KMSKS. An ATP-binding site is contributed by lysine 523. Residues 805 to 876 adopt a coiled-coil conformation; that stretch reads LEGLIDMDKE…VKARIEQLKA (72 aa).

It belongs to the class-I aminoacyl-tRNA synthetase family. ValS type 1 subfamily. As to quaternary structure, monomer.

Its subcellular location is the cytoplasm. It carries out the reaction tRNA(Val) + L-valine + ATP = L-valyl-tRNA(Val) + AMP + diphosphate. Functionally, catalyzes the attachment of valine to tRNA(Val). As ValRS can inadvertently accommodate and process structurally similar amino acids such as threonine, to avoid such errors, it has a 'posttransfer' editing activity that hydrolyzes mischarged Thr-tRNA(Val) in a tRNA-dependent manner. The polypeptide is Valine--tRNA ligase (Staphylococcus aureus (strain bovine RF122 / ET3-1)).